The sequence spans 81 residues: Cytochrome c oxidase subunit 7A1, mitochondrial (81 aa).

The transit peptide at 1–21 directs the protein to the mitochondrion; that stretch reads MRHLLGLPQLASRAFSTTVRQ. A helical membrane pass occupies residues 51–72; the sequence is ILYRLTMTLTVVGTGYSLYWLL.

It belongs to the cytochrome c oxidase VIIa family. Component of the complex IV (CIV, cytochrome c oxidase). The complex exists as a monomer or a dimer and forms supercomplexes (SCs) in the inner mitochondrial membrane with NADH-ubiquinone oxidoreductase (complex I, CI) and ubiquinol-cytochrome c oxidoreductase (cytochrome b-c1 complex, complex III, CIII), resulting in different assemblies (supercomplex SCI(1)III(2)IV(1) and megacomplex MCI(2)III(2)IV(2)).

The protein localises to the mitochondrion inner membrane. The protein operates within energy metabolism; oxidative phosphorylation. Its function is as follows. Component of the mitochondrial respiratory complex IV (CIV, also named cytochrome c oxidase complex), the last enzyme in the mitochondrial electron transport chain which drives oxidative phosphorylation. The CIV complex is the component of the respiratory chain that catalyzes the reduction of oxygen to water. Acts as an assembly factor that specifically drives the homodimerization of CIV complexes, mediating the formation of mitochondrial respiratory supercomplexes (respirasomes) containing two CIV: supercomplxes with two molecules of CIV show improved activity. This chain is Cytochrome c oxidase subunit 7A1, mitochondrial, found in Danio rerio (Zebrafish).